The following is a 613-amino-acid chain: MSVQVVSAAAAAKVPEVELKDLSPSEAEPQLGLSAAAVGAMVPPAGGGDPEAPAPAPAAERPPAPGPGSGPTAALSPAAGKVPQASAMKRSDPHHQHQRHRDGGEALVSPDGTVTEAPRTVKKQIQFADQKQEFNKRPTKIGRRSLSRSISQSSTDSYSSAASYTDSSDDETSPRDKQQKNSKGSSDFCVKNIKQAEFGRREIEIAEQEMPALMALRKRAQGEKPLAGAKIVGCTHITAQTAVLMETLGALGAQCRWAACNIYSTLNEVAAALAESGFPVFAWKGESEDDFWWCIDRCVNVEGWQPNMILDDGGDLTHWIYKKYPNMFKKIKGIVEESVTGVHRLYQLSKAGKLCVPAMNVNDSVTKQKFDNLYCCRESILDGLKRTTDMMFGGKQVVVCGYGEVGKGCCAALKAMGSIVYVTEIDPICALQACMDGFRLVKLNEVIRQVDIVITCTGNKNVVTREHLDRMKNSCIVCNMGHSNTEIDVASLRTPELTWERVRSQVDHVIWPDGKRIVLLAEGRLLNLSCSTVPTFVLSITATTQALALIELYNAPEGRYKQDVYLLPKKMDEYVASLHLPTFDAHLTELTDEQAKYLGLNKNGPFKPNYYRY.

Composition is skewed to low complexity over residues 1 to 14 and 35 to 44; these read MSVQ…AAKV and AAAVGAMVPP. Residues 1-186 form a disordered region; it reads MSVQVVSAAA…KQQKNSKGSS (186 aa). Ser2 is subject to N-acetylserine. The interval 2–111 is LISN domain, inhibits interaction with ITPR1; it reads SVQVVSAAAA…DGGEALVSPD (110 aa). The segment covering 52 to 68 has biased composition (pro residues); it reads APAPAPAAERPPAPGPG. The segment covering 70-80 has biased composition (low complexity); it reads GPTAALSPAAG. Phosphoserine is present on Ser109. Over residues 137-146 the composition is skewed to basic residues; it reads RPTKIGRRSL. Residues 147–166 are compositionally biased toward low complexity; the sequence is SRSISQSSTDSYSSAASYTD. A phosphoserine mark is found at Ser151, Ser154, Ser157, and Ser160. Thr238, Asp312, and Glu337 together coordinate substrate. Residue 338 to 340 coordinates NAD(+); it reads SVT. The substrate site is built by Lys367 and Asp371. NAD(+) is bound by residues Asn372, 403-408, Glu424, Asn459, 480-482, and Asn527; these read GEVGKG and MGH.

Belongs to the adenosylhomocysteinase family. Homotetramer. Forms heteromultimers with AHCYL1 (via the C-terminal region). Interacts with ITPR1; with lower affinity than AHCYL1 and maybe via ITPR1. Interacts with SLC4A4. Interacts with ZCCHC4. The cofactor is NAD(+). In terms of processing, phosphorylated during neuronal differentiation at the LISN domain. Highly expressed in cerebrum, cerebellum and kidney. Also expressed in thymus, spleen, testis, ovary and, at lower, levels in lung and liver (at protein level). In cerebellum, expressed in interneurons.

The protein resides in the cytoplasm. The protein localises to the microsome. It carries out the reaction S-adenosyl-L-homocysteine + H2O = L-homocysteine + adenosine. It functions in the pathway amino-acid biosynthesis; L-homocysteine biosynthesis; L-homocysteine from S-adenosyl-L-homocysteine: step 1/1. In terms of biological role, may regulate the electrogenic sodium/bicarbonate cotransporter SLC4A4 activity and Mg(2+)-sensitivity. On the contrary of its homolog AHCYL1, does not regulate ITPR1 sensitivity to inositol 1,4,5-trisphosphate. The sequence is that of Putative adenosylhomocysteinase 3 (Ahcyl2) from Mus musculus (Mouse).